The primary structure comprises 180 residues: Nucleoside-triphosphatase THEP1 (180 aa).

ATP is bound by residues 9-16 and 99-106; these read GRPGIGKT and VVIVDEVG.

It belongs to the THEP1 NTPase family.

The catalysed reaction is a ribonucleoside 5'-triphosphate + H2O = a ribonucleoside 5'-diphosphate + phosphate + H(+). Functionally, has nucleotide phosphatase activity towards ATP, GTP, CTP, TTP and UTP. May hydrolyze nucleoside diphosphates with lower efficiency. This is Nucleoside-triphosphatase THEP1 from Methanopyrus kandleri (strain AV19 / DSM 6324 / JCM 9639 / NBRC 100938).